Reading from the N-terminus, the 873-residue chain is Envelope glycoprotein B (873 aa).

The signal sequence occupies residues 1 to 21; sequence MASLKMLICVCVAILIPSTLS. Residues 22 to 740 are Virion surface-facing; it reads QDSHGIAGII…SGIASFLSNP (719 aa). Intrachain disulfides connect Cys67–Cys525, Cys84–Cys481, Cys157–Cys219, Cys311–Cys359, and Cys548–Cys598. 2 N-linked (GlcNAc...) asparagine; by host glycosylation sites follow: Asn92 and Asn111. Residues 124–130 are involved in fusion and/or binding to host membrane; it reads TWALFSR. N-linked (GlcNAc...) asparagine; by host glycosylation occurs at Asn201. An involved in fusion and/or binding to host membrane region spans residues 206–213; it reads HQTLGYRT. 2 N-linked (GlcNAc...) asparagine; by host glycosylation sites follow: Asn252 and Asn350. A disordered region spans residues 418-447; it reads QNHLPRGRERRQAAGRRTASLQSGPQGDRI. 3 N-linked (GlcNAc...) asparagine; by host glycosylation sites follow: Asn569, Asn625, and Asn639. 2 hydrophobic membrane proximal region regions span residues 684 to 738 and 715 to 734; these read IDTV…SFLS and LGTVVMTAAAAVISTVSGIA. A helical membrane pass occupies residues 741-761; the sequence is FAALGIGIAVVVSIILGLLAF. Topologically, residues 762 to 873 are intravirion; that stretch reads KYVMNLKSNP…PSWAEESEDE (112 aa). The segment at 781–807 is disordered; sequence PPAGTPPRPSRRYYKDEEEVEEDSDED. Over residues 796 to 807 the composition is skewed to acidic residues; it reads DEEEVEEDSDED. Positions 858-861 match the Internalization motif motif; the sequence is YPLL.

This sequence belongs to the herpesviridae glycoprotein B family. Homotrimer; disulfide-linked. Binds to heparan sulfate proteoglycans. Interacts with gH/gL heterodimer. A proteolytic cleavage by host furin generates two subunits that remain linked by disulfide bonds.

The protein resides in the virion membrane. It localises to the host cell membrane. Its subcellular location is the host endosome membrane. It is found in the host Golgi apparatus membrane. Its function is as follows. Envelope glycoprotein that forms spikes at the surface of virion envelope. Essential for the initial attachment to heparan sulfate moieties of the host cell surface proteoglycans. Involved in fusion of viral and cellular membranes leading to virus entry into the host cell. Following initial binding to its host receptors, membrane fusion is mediated by the fusion machinery composed at least of gB and the heterodimer gH/gL. May be involved in the fusion between the virion envelope and the outer nuclear membrane during virion egress. The sequence is that of Envelope glycoprotein B from Infectious laryngotracheitis virus (strain 632) (ILTV).